The primary structure comprises 196 residues: Imidazoleglycerol-phosphate dehydratase (196 aa).

It belongs to the imidazoleglycerol-phosphate dehydratase family.

The protein localises to the cytoplasm. It catalyses the reaction D-erythro-1-(imidazol-4-yl)glycerol 3-phosphate = 3-(imidazol-4-yl)-2-oxopropyl phosphate + H2O. Its pathway is amino-acid biosynthesis; L-histidine biosynthesis; L-histidine from 5-phospho-alpha-D-ribose 1-diphosphate: step 6/9. The protein is Imidazoleglycerol-phosphate dehydratase of Desulforudis audaxviator (strain MP104C).